Here is a 476-residue protein sequence, read N- to C-terminus: Phosphomethylpyrimidine synthase (476 aa).

Residues 1–27 (MSTQLQHARDGTVTDAMRRVADREGRD) form a disordered region. Over residues 7–27 (HARDGTVTDAMRRVADREGRD) the composition is skewed to basic and acidic residues. Substrate contacts are provided by residues Asn67, Met96, Tyr125, His160, 180–182 (SRG), 221–224 (DGLR), and Glu260. A Zn(2+)-binding site is contributed by His264. Tyr287 is a binding site for substrate. His328 contributes to the Zn(2+) binding site. Residues Cys408, Cys411, and Cys416 each coordinate [4Fe-4S] cluster. The disordered stretch occupies residues 425-476 (RDAGDDADDMTELTTETDLSESAAAEVNRPPTGTHDAPAAEQAPSPGDDDDD). Over residues 436–447 (ELTTETDLSESA) the composition is skewed to low complexity.

The protein belongs to the ThiC family. It depends on [4Fe-4S] cluster as a cofactor.

It catalyses the reaction 5-amino-1-(5-phospho-beta-D-ribosyl)imidazole + S-adenosyl-L-methionine = 4-amino-2-methyl-5-(phosphooxymethyl)pyrimidine + CO + 5'-deoxyadenosine + formate + L-methionine + 3 H(+). Its pathway is cofactor biosynthesis; thiamine diphosphate biosynthesis. In terms of biological role, catalyzes the synthesis of the hydroxymethylpyrimidine phosphate (HMP-P) moiety of thiamine from aminoimidazole ribotide (AIR) in a radical S-adenosyl-L-methionine (SAM)-dependent reaction. This Halobacterium salinarum (strain ATCC 29341 / DSM 671 / R1) protein is Phosphomethylpyrimidine synthase.